Reading from the N-terminus, the 177-residue chain is PRELI domain-containing protein 2 (177 aa).

The region spanning 1 to 175 (MGVTVDVHQV…LLKEQCGSPL (175 aa)) is the PRELI/MSF1 domain.

This chain is PRELI domain-containing protein 2 (Prelid2), found in Mus musculus (Mouse).